Reading from the N-terminus, the 145-residue chain is MTDIIRQLEAEQAAKIEEKRKLPDFQPGDTVRVQVRVTEGTRTRVQAYEGVCIARSGAGLNENFTVRKISYGEGVERVFPVYSPIVEGVEVVRRGKVRRAKLYYLRGLTGKAARIAEKKDNRTKAERAADKLAAAKAEAAKTAAE.

The protein belongs to the bacterial ribosomal protein bL19 family.

Functionally, this protein is located at the 30S-50S ribosomal subunit interface and may play a role in the structure and function of the aminoacyl-tRNA binding site. The chain is Large ribosomal subunit protein bL19 from Brucella abortus (strain S19).